We begin with the raw amino-acid sequence, 363 residues long: MSGNTFGKLFTVTTAGESHGPALVAIVDGCPPGLELDLQDLQRDLDRRKPGTSRHTTQRQEADEVEILSGVFEGKTTGASIGLLIRNTDQKSKDYSAIKDLFRPAHADYTYHHKYGIRDYRGGGRSSARETAMRVAAGAIAKKYLASQGIVIRGYMSQLGPIQIPFKTWDSVEDNAFFCPDPDKVPELEAYMDQLRRDQDSVGAKITVVADGVMPGLGEPIFDRLDAELAHALMSINAVKGVEIGAGFDCVAQRGTEHRDEMTPQGFLSNHAGGILGGISSGQPIIAHLALKPTSSITTPGRSIDVDGNAADVITKGRHDPCVGIRATPIAEAMMAIVLLDHLLRHRGQNADVSVNTPVLGQV.

The NADP(+) site is built by Arg-48 and Arg-54. Residues 125-127 (RSS), 237-238 (NA), Gly-277, 292-296 (KPTSS), and Arg-318 each bind FMN.

It belongs to the chorismate synthase family. Homotetramer. The cofactor is FMNH2.

The enzyme catalyses 5-O-(1-carboxyvinyl)-3-phosphoshikimate = chorismate + phosphate. The protein operates within metabolic intermediate biosynthesis; chorismate biosynthesis; chorismate from D-erythrose 4-phosphate and phosphoenolpyruvate: step 7/7. Its function is as follows. Catalyzes the anti-1,4-elimination of the C-3 phosphate and the C-6 proR hydrogen from 5-enolpyruvylshikimate-3-phosphate (EPSP) to yield chorismate, which is the branch point compound that serves as the starting substrate for the three terminal pathways of aromatic amino acid biosynthesis. This reaction introduces a second double bond into the aromatic ring system. The sequence is that of Chorismate synthase from Pseudomonas syringae pv. syringae (strain B728a).